The sequence spans 357 residues: Probable leucine aminopeptidase TRV_02148.1 (357 aa).

A signal peptide spans methionine 1–alanine 15. Asparagine 76 carries N-linked (GlcNAc...) asparagine glycosylation. 2 residues coordinate Zn(2+): histidine 167 and aspartate 185. The segment at aspartate 169–serine 188 is disordered. N-linked (GlcNAc...) asparagine glycosylation occurs at asparagine 186. Positions 224 and 251 each coordinate Zn(2+). A glycan (N-linked (GlcNAc...) asparagine) is linked at asparagine 269. Cysteine 291 and cysteine 295 are joined by a disulfide. Histidine 324 is a Zn(2+) binding site.

It belongs to the peptidase M28 family. M28E subfamily. Monomer. Requires Zn(2+) as cofactor.

The protein localises to the secreted. In terms of biological role, probable extracellular aminopeptidase which contributes to pathogenicity. In Trichophyton verrucosum (strain HKI 0517), this protein is Probable leucine aminopeptidase TRV_02148.1.